The following is a 106-amino-acid chain: SH3 domain-binding glutamic acid-rich-like protein 2-A (106 aa).

Residues 61-67 (QGNPLPP) carry the SH3-binding motif.

It belongs to the SH3BGR family.

It localises to the nucleus. This chain is SH3 domain-binding glutamic acid-rich-like protein 2-A (sh3bgrl2-a), found in Xenopus laevis (African clawed frog).